The sequence spans 488 residues: ATP synthase subunit beta (488 aa).

Residue 164–171 coordinates ATP; it reads GGAGVGKT.

It belongs to the ATPase alpha/beta chains family. F-type ATPases have 2 components, CF(1) - the catalytic core - and CF(0) - the membrane proton channel. CF(1) has five subunits: alpha(3), beta(3), gamma(1), delta(1), epsilon(1). CF(0) has four main subunits: a(1), b(1), b'(1) and c(9-12).

The protein resides in the cellular thylakoid membrane. The catalysed reaction is ATP + H2O + 4 H(+)(in) = ADP + phosphate + 5 H(+)(out). Functionally, produces ATP from ADP in the presence of a proton gradient across the membrane. The catalytic sites are hosted primarily by the beta subunits. This Prochlorococcus marinus (strain NATL2A) protein is ATP synthase subunit beta.